Reading from the N-terminus, the 29-residue chain is Cytolysin Uc-1 (29 aa).

A compositionally biased stretch (polar residues) spans 1-15 (DEQTGSKGPNENLPS). The interval 1–29 (DEQTGSKGPNENLPSQKDLXAKASXLTEV) is disordered.

It localises to the secreted. It is found in the nematocyst. Its subcellular location is the target cell membrane. Its function is as follows. Pore-forming toxin that lyses bovine erythrocytes at nanomolar concentrations. Is devoid of enzymatic activity. Binds to monolayers and efficiently permeabilizes small lipid vesicles composed of sphingomyelin and cholesterol. The cytolytic activity is not prevented by cholesterol or sphingomyelin. This chain is Cytolysin Uc-1, found in Urticina crassicornis (Mottled anemone).